Reading from the N-terminus, the 328-residue chain is Methionyl-tRNA formyltransferase (328 aa).

110–113 is a (6S)-5,6,7,8-tetrahydrofolate binding site; it reads SLLP.

This sequence belongs to the Fmt family.

It catalyses the reaction L-methionyl-tRNA(fMet) + (6R)-10-formyltetrahydrofolate = N-formyl-L-methionyl-tRNA(fMet) + (6S)-5,6,7,8-tetrahydrofolate + H(+). In terms of biological role, attaches a formyl group to the free amino group of methionyl-tRNA(fMet). The formyl group appears to play a dual role in the initiator identity of N-formylmethionyl-tRNA by promoting its recognition by IF2 and preventing the misappropriation of this tRNA by the elongation apparatus. This chain is Methionyl-tRNA formyltransferase, found in Prochlorococcus marinus (strain AS9601).